The chain runs to 592 residues: Pyruvate decarboxylase 3 (592 aa).

Substrate is bound by residues Asp54 and His141. A thiamine pyrophosphate binding region spans residues 419 to 501 (DSWFNCQKLK…FLINNGGYTI (83 aa)). The Mg(2+) site is built by Asp469, Asn496, and Gly498. A substrate-binding site is contributed by Glu502.

Belongs to the TPP enzyme family. In terms of assembly, homotetramer. The cofactor is a metal cation. Thiamine diphosphate serves as cofactor. Expressed at low levels in roots and shoots.

It catalyses the reaction a 2-oxocarboxylate + H(+) = an aldehyde + CO2. This chain is Pyruvate decarboxylase 3 (PDC3), found in Arabidopsis thaliana (Mouse-ear cress).